Consider the following 341-residue polypeptide: Glycerol-3-phosphate dehydrogenase [NAD(P)+] (341 aa).

Residues Ser15, Trp16, Arg36, and Lys110 each coordinate NADPH. Positions 110, 139, and 141 each coordinate sn-glycerol 3-phosphate. An NADPH-binding site is contributed by Ala143. Sn-glycerol 3-phosphate-binding residues include Lys194, Asp247, Ser257, Arg258, and Asn259. Residue Lys194 is the Proton acceptor of the active site. Arg258 contacts NADPH. NADPH is bound by residues Val282 and Glu284.

This sequence belongs to the NAD-dependent glycerol-3-phosphate dehydrogenase family.

The protein resides in the cytoplasm. The catalysed reaction is sn-glycerol 3-phosphate + NAD(+) = dihydroxyacetone phosphate + NADH + H(+). It catalyses the reaction sn-glycerol 3-phosphate + NADP(+) = dihydroxyacetone phosphate + NADPH + H(+). The protein operates within membrane lipid metabolism; glycerophospholipid metabolism. Functionally, catalyzes the reduction of the glycolytic intermediate dihydroxyacetone phosphate (DHAP) to sn-glycerol 3-phosphate (G3P), the key precursor for phospholipid synthesis. This chain is Glycerol-3-phosphate dehydrogenase [NAD(P)+], found in Xanthomonas campestris pv. campestris (strain 8004).